The following is a 95-amino-acid chain: Trypomastigote decay-accelerating factor (95 aa).

The protein belongs to the receptors of complement activation (RCA) family.

Its function is as follows. Interferes with the efficient assembly of the host C3 convertase. Could protect parasites from complement-mediated lysis by sera from a number of different species. This Trypanosoma cruzi protein is Trypomastigote decay-accelerating factor.